Consider the following 173-residue polypeptide: Catabolic 3-dehydroquinase (173 aa).

Tyr26 serves as the catalytic Proton acceptor. Residues Asn102, His108, and Asp115 each coordinate substrate. The active-site Proton donor is the His128. Substrate-binding positions include 129-130 (VS) and Arg139.

Belongs to the type-II 3-dehydroquinase family. As to quaternary structure, homododecamer. Adopts a ring-like structure, composed of an arrangement of two hexameric rings stacked on top of one another.

It catalyses the reaction 3-dehydroquinate = 3-dehydroshikimate + H2O. It participates in aromatic compound metabolism; 3,4-dihydroxybenzoate biosynthesis; 3,4-dihydroxybenzoate from 3-dehydroquinate: step 1/2. Its function is as follows. 3-dehydroquinate dehydratase; part of the qa gene cluster that mediates the catabolism of quinic acid (QA) and as such, allows the use of QA as a sole carbon source. Catalyzes the second reaction in the inducible quinic acid catabolic pathway by converting 3-dehydroquinate into 3-dehydroshikimate. The qa cluster encodes 3 inducible enymes (qa-2, qa-3 and qa-4) catalyzing the first three reactions in the catabolism of quinic acid to protocatechuic acid (also known as 3,4-Dihydroxybenzoic acid). The sequence is that of Catabolic 3-dehydroquinase from Neurospora crassa (strain ATCC 24698 / 74-OR23-1A / CBS 708.71 / DSM 1257 / FGSC 987).